A 295-amino-acid chain; its full sequence is Threonine/homoserine exporter RhtA (295 aa).

The Cytoplasmic segment spans residues 1-7 (MPGSTRK). Residues 8 to 28 (LPVWLPILVLLIAMSSIQSGA) traverse the membrane as a helical segment. Residues 29 to 38 (SLAKSLFPLV) lie on the Periplasmic side of the membrane. Positions 30–135 (LAKSLFPLVG…VLAVLGLWFL (106 aa)) constitute an EamA 1 domain. Residues 39–59 (GAPGVTALRLALGTLILIAFF) form a helical membrane-spanning segment. Topologically, residues 60 to 71 (KPWRLRFAKEQR) are cytoplasmic. A helical membrane pass occupies residues 72–92 (LPLLFYGLSLGGMNYLFYLSI). Gln-93 is a topological domain (periplasmic). Residues 94-114 (TVPLGIAVALEFTGPLAVALF) traverse the membrane as a helical segment. Residues 115–118 (SSRR) lie on the Cytoplasmic side of the membrane. The chain crosses the membrane as a helical span at residues 119 to 139 (PVDFIWVVLAVLGLWFLLPLG). Topologically, residues 140-146 (QDMSHVD) are periplasmic. The helical transmembrane segment at 147–167 (LTGAALALGAGACWAVYILTG) threads the bilayer. The EamA 2 domain maps to 159-278 (CWAVYILTGQ…LCAIIAASMG (120 aa)). Over 168 to 175 (QRAGAEHG) the chain is Cytoplasmic. Residues 176 to 196 (PATVAVGSLIAAIIFVPIGAV) form a helical membrane-spanning segment. Residues 197–200 (QAGD) are Periplasmic-facing. A helical transmembrane segment spans residues 201–221 (ALWHWSILPLGLAVAVLSTAL). At 222–237 (PYSLEMIALTRLPTRT) the chain is on the cytoplasmic side. The chain crosses the membrane as a helical span at residues 238–258 (FGTLMSMEPALAAVSGMIFLG). Over 259–262 (ETLT) the chain is Periplasmic. A helical membrane pass occupies residues 263 to 283 (GIQILALCAIIAASMGSTLTI). The Cytoplasmic portion of the chain corresponds to 284–295 (RREPQIKQVDVK).

This sequence belongs to the drug/metabolite transporter (DMT) superfamily. 10 TMS drug/metabolite exporter (DME) (TC 2.A.7.3) family.

It localises to the cell inner membrane. Involved in the efflux of threonine and homoserine. This Salmonella typhimurium (strain SL1344) protein is Threonine/homoserine exporter RhtA (rhtA).